A 499-amino-acid chain; its full sequence is Probable cytosol aminopeptidase (499 aa).

Mn(2+)-binding residues include Lys-262 and Asp-267. The active site involves Lys-274. Residues Asp-285, Asp-344, and Glu-346 each contribute to the Mn(2+) site. Arg-348 is a catalytic residue.

The protein belongs to the peptidase M17 family. Mn(2+) serves as cofactor.

The protein resides in the cytoplasm. It catalyses the reaction Release of an N-terminal amino acid, Xaa-|-Yaa-, in which Xaa is preferably Leu, but may be other amino acids including Pro although not Arg or Lys, and Yaa may be Pro. Amino acid amides and methyl esters are also readily hydrolyzed, but rates on arylamides are exceedingly low.. The enzyme catalyses Release of an N-terminal amino acid, preferentially leucine, but not glutamic or aspartic acids.. Functionally, presumably involved in the processing and regular turnover of intracellular proteins. Catalyzes the removal of unsubstituted N-terminal amino acids from various peptides. This Protochlamydia amoebophila (strain UWE25) protein is Probable cytosol aminopeptidase.